The chain runs to 264 residues: 3-methyl-2-oxobutanoate hydroxymethyltransferase (264 aa).

Residues aspartate 46 and aspartate 85 each contribute to the Mg(2+) site. Residues 46–47 (DS), aspartate 85, and lysine 113 each bind 3-methyl-2-oxobutanoate. Glutamate 115 is a Mg(2+) binding site. Glutamate 181 (proton acceptor) is an active-site residue.

This sequence belongs to the PanB family. As to quaternary structure, homodecamer; pentamer of dimers. Requires Mg(2+) as cofactor.

The protein localises to the cytoplasm. It catalyses the reaction 3-methyl-2-oxobutanoate + (6R)-5,10-methylene-5,6,7,8-tetrahydrofolate + H2O = 2-dehydropantoate + (6S)-5,6,7,8-tetrahydrofolate. It participates in cofactor biosynthesis; (R)-pantothenate biosynthesis; (R)-pantoate from 3-methyl-2-oxobutanoate: step 1/2. Functionally, catalyzes the reversible reaction in which hydroxymethyl group from 5,10-methylenetetrahydrofolate is transferred onto alpha-ketoisovalerate to form ketopantoate. The polypeptide is 3-methyl-2-oxobutanoate hydroxymethyltransferase (Salmonella typhi).